The primary structure comprises 61 residues: MAKKSMIAKQKRTPKYNVQAYTRCERCGRPHSVLRKFKLCRICFRELAYKGQIPGVKKASW.

Zn(2+)-binding residues include Cys24, Cys27, Cys40, and Cys43.

This sequence belongs to the universal ribosomal protein uS14 family. Zinc-binding uS14 subfamily. Part of the 30S ribosomal subunit. Contacts proteins S3 and S10. Zn(2+) is required as a cofactor.

Binds 16S rRNA, required for the assembly of 30S particles and may also be responsible for determining the conformation of the 16S rRNA at the A site. This Shouchella clausii (strain KSM-K16) (Alkalihalobacillus clausii) protein is Small ribosomal subunit protein uS14B.